Here is a 281-residue protein sequence, read N- to C-terminus: Very-long-chain (3R)-3-hydroxyacyl-CoA dehydratase 1 (281 aa).

Over 1 to 68 (MGKGDWRQGR…RRLGLLATAW (68 aa)) the chain is Cytoplasmic. A helical membrane pass occupies residues 69–88 (LTFYNIAMTAGWLVLAIAMV). Topologically, residues 89 to 107 (RFYMEKGTHRGLYKSIQKT) are lumenal. The helical transmembrane segment at 108-124 (LKFFQTFALLEVVHCLI) threads the bilayer. Residues 125 to 134 (GIVPTSVLVT) are Cytoplasmic-facing. A helical transmembrane segment spans residues 135–152 (GVQVSSRIFMVWLITHSI). Topologically, residues 153–158 (KPIQNE) are lumenal. Residues 159 to 173 (ESVVLFLVSWTVTEI) form a helical membrane-spanning segment. Topologically, residues 174-196 (TRYSFYTFSLLDHLPHFIKWARY) are cytoplasmic. The helical transmembrane segment at 197–214 (NLFIILYPVGVAGELLTI) threads the bilayer. Active-site residues include Tyr-203 and Glu-210. The Lumenal segment spans residues 215-244 (YAALPYVKKSGMFSVRLPNKYNVSFDYYYF). The N-linked (GlcNAc...) asparagine glycan is linked to Asn-236. The helical transmembrane segment at 245-262 (LLITMASYIPLFPQLYFH) threads the bilayer. Residues 263 to 281 (MLRQRRKVLHGEVIAEKDD) are Cytoplasmic-facing.

Belongs to the very long-chain fatty acids dehydratase HACD family. As to quaternary structure, may interact with enzymes of the ELO family (including ELOVL1); with those enzymes that mediate condensation, the first of the four steps of the reaction cycle responsible for fatty acids elongation, may be part of a larger fatty acids elongase complex. Interacts with TECR. In terms of processing, N-glycosylated. Expressed at high levels in heart, skeletal muscle and testis, weak expression in kidney and liver.

The protein localises to the endoplasmic reticulum membrane. The catalysed reaction is a very-long-chain (3R)-3-hydroxyacyl-CoA = a very-long-chain (2E)-enoyl-CoA + H2O. It catalyses the reaction (3R)-hydroxyhexadecanoyl-CoA = (2E)-hexadecenoyl-CoA + H2O. The enzyme catalyses (3R)-hydroxyoctadecanoyl-CoA = (2E)-octadecenoyl-CoA + H2O. It carries out the reaction (3R)-hydroxyeicosanoyl-CoA = (2E)-eicosenoyl-CoA + H2O. The catalysed reaction is (3R)-hydroxydocosanoyl-CoA = (2E)-docosenoyl-CoA + H2O. It catalyses the reaction (3R)-hydroxytetracosanoyl-CoA = (2E)-tetracosenoyl-CoA + H2O. The enzyme catalyses (3R)-hydroxyhexacosanoyl-CoA = (2E)-hexacosenoyl-CoA + H2O. It functions in the pathway lipid metabolism; fatty acid biosynthesis. The protein is Very-long-chain (3R)-3-hydroxyacyl-CoA dehydratase 1 of Mus musculus (Mouse).